The sequence spans 583 residues: L-galactono-1,4-lactone dehydrogenase 2, mitochondrial (583 aa).

The transit peptide at 1–36 (MRRLLLAGILRRASSSPSSHHHLHLVRALSASSPLP) directs the protein to the mitochondrion. Residues 37–78 (ASDADLRKYAGYALLLLGCGAATYYSFPLPPDALHKKAVPFK) constitute a propeptide, removed in mature form. Residues 45 to 61 (YAGYALLLLGCGAATYY) form a helical membrane-spanning segment. Residues 95–266 (THEVHTRVLL…AEVTLQCVER (172 aa)) form the FAD-binding PCMH-type domain.

The cofactor is FAD.

The protein resides in the mitochondrion membrane. The catalysed reaction is L-galactono-1,4-lactone + 4 Fe(III)-[cytochrome c] = L-dehydroascorbate + 4 Fe(II)-[cytochrome c] + 5 H(+). It participates in cofactor biosynthesis; L-ascorbate biosynthesis. Involved in the biosynthesis of ascorbic acid. The polypeptide is L-galactono-1,4-lactone dehydrogenase 2, mitochondrial (GLDH2) (Oryza sativa subsp. japonica (Rice)).